The chain runs to 182 residues: MKKDTKNLYKEKIVPSLMEEYGYKNVQLVPKLLKISINRGLGEEARSSKEMDANLKELAVIAGQQPTVNKARKSIAGFKIRDGMPVGASVTLRQDRMYAFLERLIHITLPRVRDFRGISAEGFDGRGNYNLGIKDQLIFPEISYDDVNQLQGFDISIVTSANTDEEAYSLLKKFGMPLQARA.

This sequence belongs to the universal ribosomal protein uL5 family. In terms of assembly, part of the 50S ribosomal subunit; contacts the 5S rRNA.

It is found in the plastid. Its subcellular location is the chloroplast. Binds 5S rRNA, forms part of the central protuberance of the 50S subunit. This Emiliania huxleyi (Coccolithophore) protein is Large ribosomal subunit protein uL5c (rpl5).